We begin with the raw amino-acid sequence, 193 residues long: MVYVISIEGIIGSGKSSLMDQLKRHYTCHQEPLHDWSLLQPFYDDMERYASPFQFQVLFSFHKLYSTIKNVNDVVILERCPWSSRNIFTKMLVQDGFISPQEYELYMSFYDRLAFTTNLHIYLKVDPTVAFDRILKRNREAEKTLQYDYLVRLNHQYEAEISKCDNVYVVDANKPMELVGNTVLRLLSRLCRR.

9–17 serves as a coordination point for ATP; the sequence is GIIGSGKSS. Substrate-binding residues include Glu31, Tyr43, and Gln54. Glu78 acts as the Proton acceptor in catalysis. Residues Arg79 and Glu142 each coordinate substrate.

It belongs to the DCK/DGK family.

This chain is Putative kinase protein 029R, found in Aedes vexans (Inland floodwater mosquito).